A 109-amino-acid polypeptide reads, in one-letter code: Putative pterin-4-alpha-carbinolamine dehydratase (109 aa).

The protein belongs to the pterin-4-alpha-carbinolamine dehydratase family.

The catalysed reaction is (4aS,6R)-4a-hydroxy-L-erythro-5,6,7,8-tetrahydrobiopterin = (6R)-L-erythro-6,7-dihydrobiopterin + H2O. This is Putative pterin-4-alpha-carbinolamine dehydratase from Vibrio cholerae serotype O1 (strain ATCC 39315 / El Tor Inaba N16961).